Here is an 807-residue protein sequence, read N- to C-terminus: DNA gyrase subunit B (807 aa).

The Toprim domain maps to 429 to 543 (SELFIVEGDS…KGYLYIAQPP (115 aa)). Glu435, Asp508, and Asp510 together coordinate Mg(2+).

This sequence belongs to the type II topoisomerase GyrB family. Heterotetramer, composed of two GyrA and two GyrB chains. In the heterotetramer, GyrA contains the active site tyrosine that forms a transient covalent intermediate with DNA, while GyrB binds cofactors and catalyzes ATP hydrolysis. Mg(2+) serves as cofactor. It depends on Mn(2+) as a cofactor. The cofactor is Ca(2+).

It is found in the cytoplasm. The enzyme catalyses ATP-dependent breakage, passage and rejoining of double-stranded DNA.. A type II topoisomerase that negatively supercoils closed circular double-stranded (ds) DNA in an ATP-dependent manner to modulate DNA topology and maintain chromosomes in an underwound state. Negative supercoiling favors strand separation, and DNA replication, transcription, recombination and repair, all of which involve strand separation. Also able to catalyze the interconversion of other topological isomers of dsDNA rings, including catenanes and knotted rings. Type II topoisomerases break and join 2 DNA strands simultaneously in an ATP-dependent manner. This chain is DNA gyrase subunit B, found in Rickettsia typhi (strain ATCC VR-144 / Wilmington).